The chain runs to 431 residues: Serine/threonine-protein kinase Sgk1 (431 aa).

The interval Met1 to Ile60 is necessary for localization to the mitochondria. Residues Pro66–His92 are disordered. Position 74 is a phosphoserine (Ser74). Ser78 is modified (phosphoserine; by MAPK7). Over residues Gln81–Pro91 the composition is skewed to polar residues. Positions Phe98–Phe355 constitute a Protein kinase domain. ATP-binding positions include Ile104–Val112 and Lys127. A Nuclear localization signal motif is present at residues Lys131 to Lys141. Asp222 serves as the catalytic Proton acceptor. Thr256 is modified (phosphothreonine; by PDPK1). One can recognise an AGC-kinase C-terminal domain in the interval Ser356–Leu431. Thr369 is modified (phosphothreonine; by PKA). Ser397, Ser401, and Ser422 each carry phosphoserine.

This sequence belongs to the protein kinase superfamily. AGC Ser/Thr protein kinase family. Homodimer; disulfide-linked. Forms a trimeric complex with FBXW7 and NOTCH1. Interacts with MAPK3/ERK1, MAPK1/ERK2, MAP2K1/MEK1, MAP2K2/MEK2, NEDD4, NEDD4L, MAPT/TAU, MAPK7, CREB1, SLC9A3R2/NHERF2 and KCNJ1/ROMK1. Associates with the mammalian target of rapamycin complex 2 (mTORC2) via an interaction with MAPKAP1/SIN1. In terms of processing, regulated by phosphorylation. Activated by phosphorylation on Ser-422 by mTORC2, transforming it into a substrate for PDPK1 which phosphorylates it on Thr-256. Phosphorylation on Ser-397 and Ser-401 are also essential for its activity. Phosphorylation on Ser-78 by MAPK7 is required for growth factor-induced cell cycle progression. Ubiquitinated by NEDD4L; which promotes proteasomal degradation. Ubiquitinated by SYVN1 at the endoplasmic reticulum; which promotes rapid proteasomal degradation and maintains a high turnover rate in resting cells.

It is found in the cytoplasm. The protein localises to the nucleus. The protein resides in the endoplasmic reticulum membrane. Its subcellular location is the cell membrane. It localises to the mitochondrion. The catalysed reaction is L-seryl-[protein] + ATP = O-phospho-L-seryl-[protein] + ADP + H(+). The enzyme catalyses L-threonyl-[protein] + ATP = O-phospho-L-threonyl-[protein] + ADP + H(+). Two specific sites, one in the kinase domain (Thr-256) and the other in the C-terminal regulatory region (Ser-422), need to be phosphorylated for its full activation. Phosphorylation at Ser-397 and Ser-401 are also essential for its activity. Activated by WNK1, WNK2, WNK3 and WNK4; which promote phosphorylation by mTORC2. Serine/threonine-protein kinase which is involved in the regulation of a wide variety of ion channels, membrane transporters, cellular enzymes, transcription factors, neuronal excitability, cell growth, proliferation, survival, migration and apoptosis. Plays an important role in cellular stress response. Contributes to regulation of renal Na(+) retention, renal K(+) elimination, salt appetite, gastric acid secretion, intestinal Na(+)/H(+) exchange and nutrient transport, insulin-dependent salt sensitivity of blood pressure, salt sensitivity of peripheral glucose uptake, cardiac repolarization and memory consolidation. Up-regulates Na(+) channels: SCNN1A/ENAC, SCN5A and ASIC1/ACCN2, K(+) channels: KCNJ1/ROMK1, KCNA1-5, KCNQ1-5 and KCNE1, epithelial Ca(2+) channels: TRPV5 and TRPV6, chloride channels: BSND, CLCN2 and CFTR, glutamate transporters: SLC1A3/EAAT1, SLC1A2 /EAAT2, SLC1A1/EAAT3, SLC1A6/EAAT4 and SLC1A7/EAAT5, amino acid transporters: SLC1A5/ASCT2, SLC38A1/SN1 and SLC6A19, creatine transporter: SLC6A8, Na(+)/dicarboxylate cotransporter: SLC13A2/NADC1, Na(+)-dependent phosphate cotransporter: SLC34A2/NAPI-2B, glutamate receptor: GRIK2/GLUR6. Up-regulates carriers: SLC9A3/NHE3, SLC12A1/NKCC2, SLC12A3/NCC, SLC5A3/SMIT, SLC2A1/GLUT1, SLC5A1/SGLT1 and SLC15A2/PEPT2. Regulates enzymes: GSK3A/B, PMM2 and Na(+)/K(+) ATPase, and transcription factors: CTNNB1 and nuclear factor NF-kappa-B. Stimulates sodium transport into epithelial cells by enhancing the stability and expression of SCNN1A/ENAC. This is achieved by phosphorylating the NEDD4L ubiquitin E3 ligase, promoting its interaction with 14-3-3 proteins, thereby preventing it from binding to SCNN1A/ENAC and targeting it for degradation. Regulates store-operated Ca(+2) entry (SOCE) by stimulating ORAI1 and STIM1. Regulates KCNJ1/ROMK1 directly via its phosphorylation or indirectly via increased interaction with SLC9A3R2/NHERF2. Phosphorylates MDM2 and activates MDM2-dependent ubiquitination of p53/TP53. Phosphorylates MAPT/TAU and mediates microtubule depolymerization and neurite formation in hippocampal neurons. Phosphorylates SLC2A4/GLUT4 and up-regulates its activity. Phosphorylates APBB1/FE65 and promotes its localization to the nucleus. Phosphorylates MAPK1/ERK2 and activates it by enhancing its interaction with MAP2K1/MEK1 and MAP2K2/MEK2. Phosphorylates FBXW7 and plays an inhibitory role in the NOTCH1 signaling. Phosphorylates FOXO1 resulting in its relocalization from the nucleus to the cytoplasm. Phosphorylates FOXO3, promoting its exit from the nucleus and interference with FOXO3-dependent transcription. Phosphorylates BRAF and MAP3K3/MEKK3 and inhibits their activity. Phosphorylates SLC9A3/NHE3 in response to dexamethasone, resulting in its activation and increased localization at the cell membrane. Phosphorylates CREB1. Necessary for vascular remodeling during angiogenesis. The polypeptide is Serine/threonine-protein kinase Sgk1 (SGK1) (Macaca fascicularis (Crab-eating macaque)).